The sequence spans 674 residues: Inactivation-no-after-potential D protein (674 aa).

Residues 17–106 form the PDZ 1 domain; it reads MVTLDKTGKK…KIELEIQTFD (90 aa). Residues 133 to 192 form a disordered region; sequence QTTNNNASGGQGMGQGQGQGQGMAGMNRQQSMQKRNTTFTASMRQKHSNYADEDDEDTRD. The segment covering 141–155 has biased composition (gly residues); it reads GGQGMGQGQGQGQGM. The span at 159–175 shows a compositional bias: polar residues; sequence NRQQSMQKRNTTFTASM. PDZ domains follow at residues 249–332 and 364–448; these read RIEV…TSRR and ARTV…LTLK. A compositionally biased stretch (basic and acidic residues) spans 458 to 475; sequence AAEEKKKEEAKKEEEKPQ. A disordered region spans residues 458-481; it reads AAEEKKKEEAKKEEEKPQEPATAE. PDZ domains lie at 489-577 and 584-664; these read LIEL…RADP and NVDL…TRPK. Residues serine 598 and serine 600 each carry the phosphoserine modification.

As to quaternary structure, interacts with the C-terminus of trp, and with norpA and inaC to form the inaD signaling complex. Interacts with Fkbp59, which together with trpl, rhodopsin and calmodulin may also be part of the inaD complex. Post-translationally, phosphorylated by inaC. As to expression, expressed in photoreceptor cells (R cells) of the compound eyes and ocelli.

The protein resides in the cell projection. It is found in the rhabdomere. Involved in the negative feedback regulation of the light-activated signaling cascade in photoreceptors through a calcium-mediated process. Interacts with tetrapeptide ligand located in C-terminal sequence of 3 key components of the visual cascade, tethering them and forming a macromolecular signaling phototransduction complex. The polypeptide is Inactivation-no-after-potential D protein (inaD) (Drosophila melanogaster (Fruit fly)).